A 1523-amino-acid chain; its full sequence is WD repeat-containing protein 62 (1523 aa).

The residue at position 2 (alanine 2) is an N-acetylalanine. Serine 33 carries the post-translational modification Phosphoserine. Threonine 46 carries the phosphothreonine modification. WD repeat units follow at residues 109–150 (TTRK…QVAE), 153–194 (GHKY…VVAS), 196–234 (KVSCRVIALSFSEDSSYFVTVGNRHVRFWFLEASTEAKV), 291–330 (INLKVSLSSCLCVSDELIFCGCTDGIVRIFQAHSLLYLTN), 357–396 (AVYPDTVALTFDPVHQWLSCVYKDHSIYIWDVKDIDEVSK), 411–450 (EVYPEFEDQRACLPSGTFLTCSSDNTIRFWNLDSASDTRW), 490–529 (DMKAGVRVMQVSPDGQHLASGDRSGNLRIHELHFMDELIK), 532–574 (AHDA…NLEQ), 578–618 (DHSS…DGLH), 626–665 (AEKTTLYDMDIDITQKYVAVACQDRNVRVYNTVSGKQKKC), 671–713 (GDEG…KMFG), and 714–752 (HSEIVTGMKFTYDCRHLITVSGDSCVFIWHLGPEITTCM). A Phosphoserine modification is found at serine 501. Residues 762-824 (QEQQQQPKDQ…PSKDSLDPDP (63 aa)) form a disordered region. Positions 776–790 (PPSQETYASTPSEIR) are enriched in polar residues. A compositionally biased stretch (acidic residues) spans 797 to 809 (QTEDEMEEECEPE). The WD 13 repeat unit spans residues 803–846 (EEECEPEELLKTPSKDSLDPDPRCLLTNGKLPLWAKRLLGDDDV). A compositionally biased stretch (basic and acidic residues) spans 810 to 824 (ELLKTPSKDSLDPDP). Residues serine 966 and serine 972 each carry the phosphoserine modification. Positions 1000 to 1072 (VSSVSSKDQS…GLGNGSLPQT (73 aa)) are disordered. Threonine 1072 bears the Phosphothreonine mark. Phosphoserine is present on residues serine 1117, serine 1143, and serine 1169. A disordered region spans residues 1143-1258 (SPEAQPVGQG…SLHKPLSPGQ (116 aa)). Polar residues-rich tracts occupy residues 1167 to 1177 (YMSSDGTNVLS) and 1199 to 1213 (TSVLTTGREQSISAP). Low complexity predominate over residues 1214–1225 (SSCSYLESTTSS). Residues 1226 to 1235 (HAKTTRSISL) show a composition bias toward polar residues. A Phosphoserine modification is found at serine 1234.

Can form homodimers (via C-terminus). Interacts (via C-terminus) with MAPKBP1 (via C-terminus). Interacts with CDK5RAP2, CEP152, CEP63 and KIAA0753. CEP63, CDK5RAP2, CEP152, WDR62 are proposed to form a stepwise assembled complex at the centrosome forming a ring near parental centrioles. As to expression, prominent in neural crest lineages from 9.5 dpc to 11.5 dpc. Also expressed in the ventricular and subventricular zones during the period of cerebral cortical neurogenesis (11.5-16.5 dpc), with expression decreasing in intensity by 17.5 dpc. In the cerebellum, it is strongly expressed in precursors of granule neurons at late embryonic and early postnatal stages; by postnatal day 9 (P9). Present in fetal brain, enriched within the ventricular and subventricular zone (at protein level).

The protein localises to the nucleus. The protein resides in the cytoplasm. It is found in the cytoskeleton. Its subcellular location is the spindle pole. It localises to the microtubule organizing center. The protein localises to the centrosome. The protein resides in the centriole. Required for cerebral cortical development. Plays a role in neuronal proliferation and migration. Plays a role in mother-centriole-dependent centriole duplication; the function seems also to involve CEP152, CDK5RAP2 and CEP63 through a stepwise assembled complex at the centrosome that recruits CDK2 required for centriole duplication. In Mus musculus (Mouse), this protein is WD repeat-containing protein 62 (Wdr62).